The chain runs to 131 residues: Ribonuclease P protein component (131 aa).

The protein belongs to the RnpA family. In terms of assembly, consists of a catalytic RNA component (M1 or rnpB) and a protein subunit.

It carries out the reaction Endonucleolytic cleavage of RNA, removing 5'-extranucleotides from tRNA precursor.. Functionally, RNaseP catalyzes the removal of the 5'-leader sequence from pre-tRNA to produce the mature 5'-terminus. It can also cleave other RNA substrates such as 4.5S RNA. The protein component plays an auxiliary but essential role in vivo by binding to the 5'-leader sequence and broadening the substrate specificity of the ribozyme. This Acinetobacter baylyi (strain ATCC 33305 / BD413 / ADP1) protein is Ribonuclease P protein component.